The primary structure comprises 304 residues: MQQATGNELLGILDLDNDIDFETAYQMLSSNFDDQMSAHIHENTFSATSPPLLTHELGIIPNVATVQPSHVETIPADNQTHHAPLHTHAHYLNHNPHQPSMGFDQALGLKLSPSSSGLLSTNESNAIEQFLDNLISQDMMSSNASMNSESHLHIRSPKKQHRYTELNQRYPETHPHSNTGELPTNTADVPTEFTTREGPHQPIGNDHYNPPPFSVPEIRIPDSDIPANIEDDPVKVRKWKHVQMEKIRRINTKEAFERLIKSVRTPPKENGKRIPKHILLTCVMNDIKSIRSANEALQHILDDS.

In terms of domain architecture, bHLH spans valine 236–isoleucine 290.

As to quaternary structure, efficient DNA binding requires dimerization with another bHLH protein.

The protein resides in the nucleus. In terms of biological role, positive regulatory factor required for depression of the coregulated phospholipid biosynthetic enzymes. Also involved in the expression of ITR1. This chain is Protein INO2 (INO2), found in Saccharomyces cerevisiae (strain ATCC 204508 / S288c) (Baker's yeast).